Here is a 555-residue protein sequence, read N- to C-terminus: Formate--tetrahydrofolate ligase (555 aa).

65 to 72 is an ATP binding site; that stretch reads TPAGEGKS.

The protein belongs to the formate--tetrahydrofolate ligase family.

It catalyses the reaction (6S)-5,6,7,8-tetrahydrofolate + formate + ATP = (6R)-10-formyltetrahydrofolate + ADP + phosphate. The protein operates within one-carbon metabolism; tetrahydrofolate interconversion. This Staphylococcus aureus (strain Mu3 / ATCC 700698) protein is Formate--tetrahydrofolate ligase.